A 3953-amino-acid polypeptide reads, in one-letter code: MPGERPRGAPPPTMTGDLQPRQVASSPGHPSQPPLEDNTPATRTTKGAREAGGQAQAMELPEAQPRQARDGELKPPSLRGQAPSSTPGKRGSPQTPPGRSPLQAPSRLAGRAEGSPPQRYILGIASSRTKPTLDETPENPQLEAAQLPEVDTPQGPGTGAPLRPGLPRTEAQPAAEELGFHRCFQEPPSSFTSTNYTSPSATPRPPAPGPPQSRGTSPLQPGSYPEYQASGADSWPPAAENSFPGANFGVPPAEPEPIPKGSRPGGSPRGVSFQFPFPALHGASTKPFPADVAGHAFTNGPLVFAFHQPQGAWPEEAVGTGPAYPLPTQPAPSPLPCYQGQPGGLNRHSDLSGALSSPGAAHSAPRPFSDSLHKSLTKILPERPPSAQDGLGSTRGPPSSLPQRHFPGQAYRASGVDTSPGPPDTELAAPGPPPARLPQLWDPTAAPYPTPPGGPLAATRSMFFNGQPSPGQRLCLPQSAPLPWPQVLPTARPSPHGMEMLSRLPFPAGGPEWQGGSQGALGTAGKTPGPREKLPAVRSSQGGSPALFTYNGMTDPGAQPLFFGVAQPQVSPHGTPSLPPPRVVGASPSESPLPSPATNTAGSTCSSLSPMSSSPANPSSEESQLPGPLGPSAFFHPPTHPQETGSPFPSPEPPHSLPTHYQPEPAKAFPFPADGLGAEGAFQCLEETPFPHEGPEVGRGGLQGFPRAPPPYPTHHFSLSSASLDQLDVLLTCRQCDRNYSSLAAFLAHRQFCGLLLARAKDGHQRSPGPPGLPSPPAAPRVPADAHAGLLSHAKTFLLAGDAQAEGKDDPLRTGFLPSLAATPFPLPASDLDMEDDAKLDSLITEALNGMEYQSDNPEIDSSFIDVFADEEPSGPRGPSSGHPLKSKAGVTPESKAPPPLPAATPDPQTPRPGDRGCPARGRPKTRSLGLAPTEADAPSQGRQQRRGKQLKLFRKDLDSGGAAEGSGSGGGGRASGLRPRRNDGLGERPPPRPRRPRTQAPGSRADPAPRVPRAAALPEETRSSRRRRLPPRKDPRKRKARGGAWGKELILKIVQQKNRRHRRLGRRAGRCGSLAAGRPRPGAEDRRLREYDFASESEEDEQPPPRGPGFRGRRGRGEKRKEVELTQGPREDEPQKPRKAARQEAGGDGAPANPEEPGGSRPGPGRSPQARGPSRSLETGAAAREGGPKCADRPSVAPKDPLQVPTNTETSEETRPSLDFPQEAKEPETAEESAPDSTEFTEALRSPPAACAGEMGASPGLLIPEQPPPSRHDTGTPKPSGSLANTAPHGSSPTPGVGSLLGGPGGTQAPVSHNSKDPPARQPGEFLAPVANPSSTACPKPSVLSSKISSFGCDPAGFNRDPLGVPVAKKGPQPYSSPHSELFLGPKDLAGCFLEELHPKPSARDAPPASSSCLCQDGEDAGSLEPQLPRSPPGTAETEPGRAASPPTLESSSLFPDLPVDRFDPPLYGSLSANRDSGLPFACADPPQKTVPSDPPYPSFLLLEEVSPMLPSHFPDLSGGKVLSKTCPPERTVVPGAAPSLPGKGSGCSVALMSHLSEDELEIQKLVTELESQLQRSKDTRGAPRELAEAESVGRVELGTGTEPPSQRRTCQATVPHEDTFSAADLTRVGESTAHREGAESAVATVEAVQGRPGGTWPCPASFHPGHAALLPCAQEDLVSGAPFSPRGANFHFQPVQKAGASKTGLCQAEGDSRPPQDVCLPEPSKQPGPQLDAGSLAKCSPDQELSFPKNKEAASSQESEDSLRLLPCEQRGGFLPEPGTADQPHRGAPAPEAFGSPAVHLAPDLAFQGDGAPPLDATWPFGASPSHAAQGHSAGRAGGHLHPTAGRPGFEGNEFAPAGASSLTAPRGREAWLVPVPSPACVSNTHPSRRSQDPALSPPIRQLQLPGPGVAKSKDGILGLQELTPAAQSPPRVNPSGLEGGTVEGGKVACGPAQGSPGGVQVTTLPAVAGHQLGLEADGHWGLLGQAEKTQGQGTANQLQPENGVSPGGTDNHASVNASPKTALTGPTEGAVLLEKCKGSRAAMSLQEEAEPTPSPPSPNRESLALALTAAHSRSGSEGRTPERASSPGLNKPLLATGDSPAPSVGDLAACAPSPTSAAHMPCSLGPLPREDPLTSPSRAQGGLGGQLPASPSCRDPPGPQQLLACSPAWAPLEEADGVQATTDTGAEDSPVAPPSLTTSPCDPKEALAGCLLQGEGSPLEDPSSWPPGSVSAVTCTHSGDTPKDSTLRIPEDSRKEKLWESPGRATSPPLAGAVSPSVAVRATGLSSTPTGDEAQAGRGLPGPDPQSRGAPPHTNPDRMPRGHSSYSPSNTARLGHREGQAVTAVPTEPPTLQGAGPDSPACLEGEMGTSSKEPEDPGTPETGRSGATKMPRVTCPSTGLGLGRTTAPSSTASDFQSDSPQSHRNASHQTPQGDPLGPQDLKQRSRGYKKKPASTENGQWKGQAPHGPVTCEVCAASFRSGPGLSRHKARKHRPHPGAPAEPSPAALPAQQPLEPLAQKCQPPRKKSHRVSGKERPNHSRGDPSHVTQPPPAQGSKEVLRAPGSPHSQQLHPPSPTEHEVDVKTPASKPRPDQAREDELHPKQAEKREGRRWRREPTVDSPSHSEGKSNKKRGKLRGRRLREESILPVSADVISDGRGSRPSPAMASYAASPSHCLSVEGGPEADGEQPPRLATLGPGVMEGAAETDQEALCAGETGAQKPPGDRMLCPGRMDGAALGEQPTGQKGASARGFWGPRETKALGVCKESGSEPAEDSSRAHSRSEEGVWEENTPPLGPLGFPETSSSPADSTTSSCLQGLPDNPDTQGGVQGPEGPTPDASGSSAKDPPSLFDDEVSFSQLFPPGGRLTRKRNPHVYGKRCEKPVLPLPTQPSFEEGGDPTLGPARLPTDLSDSSSLCLCHEDPWEDEDPAGLPESFLLDGFLNSRVPGIDPWAPGLSLWALEPSREAGAEKLPSHCPEDDRPEAIPELHMVPAAWRGLEMPAPADDSSSSLGDVSPEPPSLERERCDGGLPGNTHLLPLRATDFEVLSTKFEMQDLCFLGPFEDPVGLPGPSFLDFEGTASSQGPQSRRTEEAAGAGRAQGRGRPAKGRRASYKCKVCFQRFRSLGELDLHKLAHTPAPPPTCYMCVERRFGSRELLRGHLQERHAQSKAGPWACGMCLKEVADVWMYNEHLREHAVRFARRGQARRSLGDLPGGLEGSSAVAHLLNSITEPAPKHHRGKRSAGKAAGSPGDPWGQEGEAKKDSPGERAKPRARSTPSNPDGAATPDSASATALADAGSPGPPRTTPSPSPDPWAGGEPLLQATPVHEACKDPSRDCHHCGKRFPKPFKLQRHLAVHSPQRVYLCPRCPRVYPEHGELLAHLGGAHGLLERPELQHTPLYACELCATVMRIIKKSFACSSCNYTFAKKEQFDRHMNKHLRGGRQPFAFRGVRRPGAPGQKARALEGTLPSKRRRVAMPGSAPGPGEDRPPPRGSSPILSEGSLPALLHLCSEVAPSTTKGWPETLERPVDPVTHPIRGCELPSNHQECPPPSLSPFPAALADGRGDCALDGALERPENEASPGSPGPLLQQALPLGASLPRPGARGQDAEGKRAPLVFSGKRRAPGARGRCAPDHFQEDHLLQKEKEVSSSHMVSEGGPRGAFHKGSATKPAGCQSSSKDRSAASTPSKALKFPVHPRKAVGSLAPGELARGTENGMKPATPKAKPGPSSQGSGSPRPGTKTGGGSQPQPASGQLQSETATTPAKPSFPSRSPAPERLPARAQAKSCTKGPREAGEQGPHGSLGPKEKGESSTKRKKGQVPGPARSESVGSFGRAPSAPDKPPRTPRKQATPSRVLPTKPKPNSQNKPRPPPSEQRKAEPGHTQRKDRLGKAFPQGRPLLRPPKRGTAVHGAEPAEPHTHRTAEAQSDLLSQLFGQRLTGFKIPLKKDASE.

14 disordered regions span residues 1–274 (MPGE…VSFQ), 313–465 (WPEE…MFFN), 512–672 (EWQG…FPFP), 763–784 (GHQRSPGPPGLPSPPAAPRVPA), 869–1383 (ADEE…HSEL), 1400–1461 (PKPS…DLPV), 1575–1610 (LQRSKDTRGAPRELAEAESVGRVELGTGTEPPSQRR), 1703–1864 (SKTG…GASS), 1884–1947 (VSNT…TVEG), 1991–2030 (KTQGQGTANQLQPENGVSPGGTDNHASVNASPKTALTGPT), 2070–2700 (LTAA…TLGP), 2716–2915 (AGET…LSDS), 3001–3036 (EMPAPADDSSSSLGDVSPEPPSLERERCDGGLPGNT), and 3072–3110 (GPSFLDFEGTASSQGPQSRRTEEAAGAGRAQGRGRPAKG). Polar residues predominate over residues 187–198 (PPSSFTSTNYTS). 2 stretches are compositionally biased toward pro residues: residues 202-211 (TPRPPAPGPP) and 324-335 (YPLPTQPAPSPL). Residues 603-623 (STCSSLSPMSSSPANPSSEES) show a composition bias toward low complexity. 2 stretches are compositionally biased toward pro residues: residues 768 to 780 (PGPPGLPSPPAAP) and 896 to 911 (KAPPPLPAATPDPQTP). Residues 944–953 (QQRRGKQLKL) show a composition bias toward basic residues. Residues 963 to 975 (AAEGSGSGGGGRA) are compositionally biased toward gly residues. Basic and acidic residues predominate over residues 981–991 (RRNDGLGERPP). Low complexity predominate over residues 1005–1017 (RADPAPRVPRAAA). Composition is skewed to basic residues over residues 1025-1042 (SRRRRLPPRKDPRKRKAR) and 1058-1070 (KNRRHRRLGRRAG). Positions 1082-1093 (PGAEDRRLREYD) are enriched in basic and acidic residues. A compositionally biased stretch (acidic residues) spans 1094–1103 (FASESEEDEQ). The segment covering 1120–1137 (KRKEVELTQGPREDEPQK) has biased composition (basic and acidic residues). Low complexity predominate over residues 1158–1177 (PGGSRPGPGRSPQARGPSRS). Residues 1213-1229 (EETRPSLDFPQEAKEPE) are compositionally biased toward basic and acidic residues. Polar residues-rich tracts occupy residues 1278-1290 (PKPSGSLANTAPH) and 1333-1350 (NPSSTACPKPSVLSSKIS). Basic and acidic residues predominate over residues 1577–1595 (RSKDTRGAPRELAEAESVG). Composition is skewed to polar residues over residues 1991–2005 (KTQGQGTANQLQPEN) and 2014–2024 (NHASVNASPKT). A compositionally biased stretch (basic and acidic residues) spans 2243–2262 (DTPKDSTLRIPEDSRKEKLW). The span at 2409-2435 (TAPSSTASDFQSDSPQSHRNASHQTPQ) shows a compositional bias: polar residues. The C2H2-type 1 zinc finger occupies 2472–2498 (VTCEVCAASFRSGPGLSRHKARKHRPH). Positions 2488 to 2498 (SRHKARKHRPH) are enriched in basic residues. The segment covering 2506–2521 (SPAALPAQQPLEPLAQ) has biased composition (low complexity). Positions 2534–2546 (SGKERPNHSRGDP) are enriched in basic and acidic residues. Over residues 2565–2574 (PGSPHSQQLH) the composition is skewed to low complexity. Residues 2592-2631 (PRPDQAREDELHPKQAEKREGRRWRREPTVDSPSHSEGKS) are compositionally biased toward basic and acidic residues. The segment covering 2632–2642 (NKKRGKLRGRR) has biased composition (basic residues). A compositionally biased stretch (low complexity) spans 2664–2676 (PSPAMASYAASPS). Residues 2777–2787 (DSSRAHSRSEE) are compositionally biased toward basic and acidic residues. Residues 2805 to 2816 (TSSSPADSTTSS) are compositionally biased toward low complexity. The span at 2869–2879 (LTRKRNPHVYG) shows a compositional bias: basic residues. The segment covering 3095–3105 (AAGAGRAQGRG) has biased composition (low complexity). The C2H2-type 2 zinc finger occupies 3115 to 3137 (YKCKVCFQRFRSLGELDLHKLAH). The disordered stretch occupies residues 3232–3322 (TEPAPKHHRG…PDPWAGGEPL (91 aa)). The segment covering 3260-3272 (GEAKKDSPGERAK) has biased composition (basic and acidic residues). Pro residues predominate over residues 3302-3314 (PGPPRTTPSPSPD). C2H2-type zinc fingers lie at residues 3337–3359 (RDCHHCGKRFPKPFKLQRHLAVH) and 3365–3388 (YLCPRCPRVYPEHGELLAHLGGAH). The segment at 3418–3442 (FACSSCNYTFAKKEQFDRHMNKHLR) adopts a C2H2-type 5; degenerate zinc-finger fold. Disordered regions lie at residues 3448 to 3501 (FAFR…PILS), 3518 to 3559 (STTK…SPFP), and 3576 to 3925 (ERPE…HRTA). Residues 3584-3602 (PGSPGPLLQQALPLGASLP) show a composition bias toward low complexity. Residues 3633–3651 (CAPDHFQEDHLLQKEKEVS) show a composition bias toward basic and acidic residues. Composition is skewed to low complexity over residues 3728-3741 (PGPSSQGSGSPRPG) and 3749-3759 (QPQPASGQLQS). Basic and acidic residues-rich tracts occupy residues 3876-3892 (EQRKAEPGHTQRKDRLG) and 3915-3925 (EPAEPHTHRTA).

It belongs to the krueppel C2H2-type zinc-finger protein family. Detected in cornea, sclera, skin fibroblasts and striated muscle.

It is found in the nucleus. May be involved in transcriptional regulation. This chain is Zinc finger protein 469 (ZNF469), found in Homo sapiens (Human).